Reading from the N-terminus, the 266-residue chain is Glucosamine-6-phosphate deaminase (266 aa).

Residue D72 is the Proton acceptor; for enolization step of the active site. Residue D141 is the For ring-opening step of the active site. The active-site Proton acceptor; for ring-opening step is H143. The For ring-opening step role is filled by E148.

Belongs to the glucosamine/galactosamine-6-phosphate isomerase family. NagB subfamily. Homohexamer.

The catalysed reaction is alpha-D-glucosamine 6-phosphate + H2O = beta-D-fructose 6-phosphate + NH4(+). Its pathway is amino-sugar metabolism; N-acetylneuraminate degradation; D-fructose 6-phosphate from N-acetylneuraminate: step 5/5. Allosterically activated by N-acetylglucosamine 6-phosphate (GlcNAc6P). In terms of biological role, catalyzes the reversible isomerization-deamination of glucosamine 6-phosphate (GlcN6P) to form fructose 6-phosphate (Fru6P) and ammonium ion. In Pectobacterium carotovorum subsp. carotovorum (strain PC1), this protein is Glucosamine-6-phosphate deaminase.